A 267-amino-acid chain; its full sequence is Probable membrane transporter protein MJ0441 (267 aa).

Helical transmembrane passes span 10-30, 31-51, 55-75, 87-107, 158-178, 185-205, and 213-233; these read LLLLPLLIIVGFIVGILGSLF, GIGGGFLVAPILTFIFDYFGI, VKFAVGTSLFVVFINSIISIF, ASITIGIISLVFSYFSGFLVV, FLSGLFGIGGGIVIIPILAMA, AVAISVGVIPLTSIGGLISYL, and IYNIGYVSIPIALIMAIPIIY.

The protein belongs to the 4-toluene sulfonate uptake permease (TSUP) (TC 2.A.102) family.

Its subcellular location is the cell membrane. The protein is Probable membrane transporter protein MJ0441 of Methanocaldococcus jannaschii (strain ATCC 43067 / DSM 2661 / JAL-1 / JCM 10045 / NBRC 100440) (Methanococcus jannaschii).